The sequence spans 673 residues: Methionine--tRNA ligase (673 aa).

The short motif at 13 to 23 (PYANGSIHLGH) is the 'HIGH' region element. 4 residues coordinate Zn(2+): C144, C147, C157, and C160. Residues 330–334 (KMSKS) carry the 'KMSKS' region motif. K333 contacts ATP. In terms of domain architecture, tRNA-binding spans 572–673 (DFAQLDLRIA…GRARAGMTIS (102 aa)).

The protein belongs to the class-I aminoacyl-tRNA synthetase family. MetG type 1 subfamily. In terms of assembly, homodimer. Requires Zn(2+) as cofactor.

The protein resides in the cytoplasm. It carries out the reaction tRNA(Met) + L-methionine + ATP = L-methionyl-tRNA(Met) + AMP + diphosphate. In terms of biological role, is required not only for elongation of protein synthesis but also for the initiation of all mRNA translation through initiator tRNA(fMet) aminoacylation. This is Methionine--tRNA ligase from Dichelobacter nodosus (strain VCS1703A).